The primary structure comprises 64 residues: Putative H/ACA ribonucleoprotein complex subunit 3 (64 aa).

This sequence belongs to the NOP10 family. In terms of assembly, component of the small nucleolar ribonucleoprotein particles containing H/ACA-type snoRNAs (H/ACA snoRNPs).

It localises to the nucleus. It is found in the nucleolus. Required for ribosome biogenesis. Part of a complex which catalyzes pseudouridylation of rRNA. This involves the isomerization of uridine such that the ribose is subsequently attached to C5, instead of the normal N1. Pseudouridine ('psi') residues may serve to stabilize the conformation of rRNAs. This chain is Putative H/ACA ribonucleoprotein complex subunit 3 (nola-3), found in Caenorhabditis elegans.